Consider the following 224-residue polypeptide: BOS complex subunit TMEM147 (224 aa).

Residues 1–21 traverse the membrane as a helical segment; it reads MTLFHFGNCFALAYFPYFITY. The Cytoplasmic portion of the chain corresponds to 22–34; that stretch reads KCSGLSEYNAFWK. A helical membrane pass occupies residues 35 to 58; the sequence is CVQAGVTYLFVQLCKMLFLATFFP. Topologically, residues 59–66 are lumenal; sequence TWEGGIYD. The helical transmembrane segment at 67 to 88 threads the bilayer; sequence FIGEFMKASVDVADLIGLNLVM. The Cytoplasmic segment spans residues 89-98; it reads SRNAGKGEYK. A helical transmembrane segment spans residues 99-124; the sequence is IMVAALGWATAELIMSRCIPLWVGAR. At 125-129 the chain is on the lumenal side; sequence GIEFD. The chain crosses the membrane as a helical span at residues 130 to 155; the sequence is WKYIQMSIDSNISLVHYIVASAQVWM. At 156–164 the chain is on the cytoplasmic side; sequence ITRYDLYHT. The chain crosses the membrane as a helical span at residues 165 to 187; that stretch reads FRPAVLLLMFLSVYKAFVMETFV. Residues 188 to 194 are Lumenal-facing; the sequence is HLCSLGS. Residues 195 to 216 form a helical membrane-spanning segment; it reads WAALLARAVVTGLLALSTLALY. At 217-224 the chain is on the cytoplasmic side; that stretch reads VAVVNVHS.

This sequence belongs to the TMEM147 family. Component of the back of Sec61 (BOS) complex, composed of NCLN/Nicalin, NOMO (NOMO1, NOMO2 or NOMO3) and TMEM147. The BOS complex is part of the multi-pass translocon (MPT) complex, composed of three subcomplexes, the GEL complex (composed of RAB5IF/OPTI and TMCO1), the BOS complex (composed of NCLN/Nicalin, NOMO and TMEM147) and the PAT complex (composed of WDR83OS/Asterix and CCDC47). The MPT complex associates with the SEC61 complex. Interacts with CHRM3, CHRM1 and AVPR2. Interacts with LBR; promoting LBR localization to the nucleus inner membrane. Interacts with DHCR7.

It is found in the endoplasmic reticulum membrane. The protein localises to the nucleus membrane. It localises to the cell membrane. Functionally, component of the multi-pass translocon (MPT) complex that mediates insertion of multi-pass membrane proteins into the lipid bilayer of membranes. The MPT complex takes over after the SEC61 complex: following membrane insertion of the first few transmembrane segments of proteins by the SEC61 complex, the MPT complex occludes the lateral gate of the SEC61 complex to promote insertion of subsequent transmembrane regions. Also acts as a negative regulator of CHRM3 function, most likely by interfering with its trafficking to the cell membrane. Negatively regulates CHRM3-mediated calcium mobilization and activation of RPS6KA1/p90RSK activity. Regulates LBR localization to the nucleus inner membrane. The sequence is that of BOS complex subunit TMEM147 from Homo sapiens (Human).